A 646-amino-acid polypeptide reads, in one-letter code: Microtubule-associated protein 9 (646 aa).

The residue at position 2 (Ser2) is an N-acetylserine. Tyr12 is modified (phosphotyrosine). Disordered regions lie at residues 75 to 226, 242 to 418, 491 to 511, 531 to 554, 570 to 597, and 609 to 646; these read DFHI…QTEE, SLTS…LEPD, RLEE…KGEA, RREK…KKKD, LKQK…KDKQ, and KERQ…SKVF. Polar residues-rich tracts occupy residues 105–119 and 157–167; these read ALDS…SSPD and RSTSSGETSSG. A compositionally biased stretch (basic and acidic residues) spans 188–204; sequence SHTEEGVRPGVDKEHSI. Composition is skewed to polar residues over residues 205-222, 280-291, and 330-340; these read SEAS…GTEL, LLSNENEGSSVL, and PLLSTSPSVIT. Residues 346-357 are compositionally biased toward basic and acidic residues; sequence EPAKKANEDRNT. The segment covering 386 to 398 has biased composition (polar residues); the sequence is TKRSPSAATSSHY. A compositionally biased stretch (basic and acidic residues) spans 405-418; sequence LDQKQPRKQSLEPD. Positions 442–596 form a coiled coil; it reads MHRIKRIESE…KRAEKKDKDK (155 aa). Positions 637–646 are enriched in polar residues; the sequence is PSRTAPSKVF.

In terms of assembly, binds to purified microtubules via its C-terminus.

The protein localises to the cytoplasm. Its subcellular location is the cytoskeleton. The protein resides in the spindle. Involved in organization of the bipolar mitotic spindle. Required for bipolar spindle assembly, mitosis progression and cytokinesis. May act by stabilizing interphase microtubules. The chain is Microtubule-associated protein 9 (Map9) from Mus musculus (Mouse).